A 380-amino-acid chain; its full sequence is Cytochrome b (380 aa).

4 consecutive transmembrane segments (helical) span residues 34 to 54 (FGSLLALCLVTQILTGLLLAM), 78 to 99 (WLIRNMHANGASFFFICIYMHI), 114 to 134 (WNTGVLLLLTLMATAFVGYVL), and 179 to 199 (FFALHFLLPFMIAGLTLIHLT). Heme b contacts are provided by histidine 84 and histidine 98. The heme b site is built by histidine 183 and histidine 197. Histidine 202 is a binding site for a ubiquinone. 4 helical membrane-spanning segments follow: residues 227–247 (LKDILGLALLLLPLTAMALFS), 289–309 (LGGVLALAASVLVLLLCPFLH), 321–341 (LSQSLFWILVANLLILTWIGS), and 348–368 (FIIIGQLASTTYFIILLILFP).

It belongs to the cytochrome b family. As to quaternary structure, the cytochrome bc1 complex contains 11 subunits: 3 respiratory subunits (MT-CYB, CYC1 and UQCRFS1), 2 core proteins (UQCRC1 and UQCRC2) and 6 low-molecular weight proteins (UQCRH/QCR6, UQCRB/QCR7, UQCRQ/QCR8, UQCR10/QCR9, UQCR11/QCR10 and a cleavage product of UQCRFS1). This cytochrome bc1 complex then forms a dimer. Heme b serves as cofactor.

It localises to the mitochondrion inner membrane. In terms of biological role, component of the ubiquinol-cytochrome c reductase complex (complex III or cytochrome b-c1 complex) that is part of the mitochondrial respiratory chain. The b-c1 complex mediates electron transfer from ubiquinol to cytochrome c. Contributes to the generation of a proton gradient across the mitochondrial membrane that is then used for ATP synthesis. The polypeptide is Cytochrome b (MT-CYB) (Oceanodroma tristrami (Tristram's storm-petrel)).